We begin with the raw amino-acid sequence, 596 residues long: Thioredoxin reductase 1, mitochondrial (596 aa).

Residues 59-87 form a disordered region; the sequence is LTGQRGSRDSTGATGGNAPAGSGAGAPPP. The span at 68–79 shows a compositional bias: low complexity; the sequence is STGATGGNAPAG. Residues 120 to 126, 143 to 147, 159 to 170, 233 to 235, 262 to 266, Ser282, Phe286, and Tyr302 each bind FAD; these read IGGGSAG, LDFVK, GGTCVNVGCIPK, GLG, and AVGGR. The cysteines at positions 162 and 167 are disulfide-linked. NADP(+) is bound by residues 322-328 and Pro355; that span reads VRSIVLR. FAD is bound by residues 392 to 399, 429 to 432, 438 to 443, and Phe472; these read RKGLVDDL, VGDI, and ELTPVA. Catalysis depends on His569, which acts as the Proton acceptor. Residue Pro570 coordinates FAD. Cysteines 594 and 595 form a disulfide.

Belongs to the class-I pyridine nucleotide-disulfide oxidoreductase family. In terms of assembly, homodimer. FAD is required as a cofactor. In terms of tissue distribution, during embryogenesis, expression is seen in germ cell progenitors, developing midgut, hindgut and proventriculus.

Its subcellular location is the mitochondrion. The protein localises to the cytoplasm. It carries out the reaction [thioredoxin]-dithiol + NADP(+) = [thioredoxin]-disulfide + NADPH + H(+). Functionally, thioredoxin system is a major player in glutathione metabolism, due to the demonstrated absence of a glutathione reductase. Functionally interacts with the Sod/Cat reactive oxidation species (ROS) defense system and thereby has a role in preadult development and life span. Lack of a glutathione reductase suggests antioxidant defense in Drosophila, and probably in related insects, differs fundamentally from that in other organisms. The protein is Thioredoxin reductase 1, mitochondrial of Drosophila melanogaster (Fruit fly).